The following is a 726-amino-acid chain: Catalase-peroxidase 1 (726 aa).

A disordered region spans residues 1–33 (MSTSDDIHNTTATGKCPFHQGGHDQSAGAGTTT). The tryptophyl-tyrosyl-methioninium (Trp-Tyr) (with M-252) cross-link spans 105–226 (WHGAGTYRSI…LGATEMGLIY (122 aa)). Catalysis depends on H106, which acts as the Proton acceptor. Residues 226–252 (YVNPEGPDHSGEPLSAAAAIRATFGNM) constitute a cross-link (tryptophyl-tyrosyl-methioninium (Tyr-Met) (with W-105)). Residue H267 coordinates heme b.

This sequence belongs to the peroxidase family. Peroxidase/catalase subfamily. In terms of assembly, homodimer or homotetramer. Heme b is required as a cofactor. Formation of the three residue Trp-Tyr-Met cross-link is important for the catalase, but not the peroxidase activity of the enzyme.

It carries out the reaction H2O2 + AH2 = A + 2 H2O. It catalyses the reaction 2 H2O2 = O2 + 2 H2O. In terms of biological role, bifunctional enzyme with both catalase and broad-spectrum peroxidase activity. The protein is Catalase-peroxidase 1 of Escherichia coli O157:H7.